A 295-amino-acid polypeptide reads, in one-letter code: MKKTAIITDSTASIKPGEINGVYILPLQVIVDGEKSFRDGIEIDYDHVHKLLKENPHGLNISTSLPRQSDLLKIFEEIKTKYDRFIFLPLSKGLSGTYDMLVQLAKELSEQNKDKEFLVFETSDIAISLKWLVEDIKALVDKGCDNQTIKAKVESHKQNILSAVTLKNLVQMRKGGRISGLKKFITTLLRVKPIILFDKGVNTLGAKVFSFSQAVEKIFGFVKTKFGDNYKIKRIGFCYSFCKNYANEIKKIITDFIEHNKINFQNEIENAFITSVIIVHTGIDAFSISLLIDNK.

Positions 4-292 constitute a DegV domain; sequence TAIITDSTAS…IDAFSISLLI (289 aa). Hexadecanoate-binding residues include threonine 63 and serine 95.

May bind long-chain fatty acids, such as palmitate, and may play a role in lipid transport or fatty acid metabolism. The polypeptide is DegV domain-containing protein MG326 (Mycoplasma genitalium (strain ATCC 33530 / DSM 19775 / NCTC 10195 / G37) (Mycoplasmoides genitalium)).